A 74-amino-acid polypeptide reads, in one-letter code: Anaphase-promoting complex subunit 13 (74 aa).

A disordered region spans residues 33 to 56; the sequence is LSELPEPEQDNGGTTESVKEQEMK.

Belongs to the APC13 family. The mammalian APC/C is composed at least of 14 distinct subunits ANAPC1, ANAPC2, CDC27/APC3, ANAPC4, ANAPC5, CDC16/APC6, ANAPC7, CDC23/APC8, ANAPC10, ANAPC11, CDC26/APC12, ANAPC13, ANAPC15 and ANAPC16 that assemble into a complex of at least 19 chains with a combined molecular mass of around 1.2 MDa; APC/C interacts with FZR1 and FBXO5.

It is found in the nucleus. It participates in protein modification; protein ubiquitination. Component of the anaphase promoting complex/cyclosome (APC/C), a cell cycle-regulated E3 ubiquitin ligase that controls progression through mitosis and the G1 phase of the cell cycle. The APC/C complex acts by mediating ubiquitination and subsequent degradation of target proteins: it mainly mediates the formation of 'Lys-11'-linked polyubiquitin chains and, to a lower extent, the formation of 'Lys-48'- and 'Lys-63'-linked polyubiquitin chains. The APC/C complex catalyzes assembly of branched 'Lys-11'-/'Lys-48'-linked branched ubiquitin chains on target proteins. The chain is Anaphase-promoting complex subunit 13 (Anapc13) from Mus musculus (Mouse).